The chain runs to 234 residues: Fibrillarin-like rRNA/tRNA 2'-O-methyltransferase (234 aa).

Residues 91–92 (TT), 110–111 (EF), 137–138 (DA), and 157–160 (DVAQ) contribute to the S-adenosyl-L-methionine site.

The protein belongs to the methyltransferase superfamily. Fibrillarin family. Interacts with nop5. Component of box C/D small ribonucleoprotein (sRNP) particles that contain rpl7ae, FlpA and nop5, plus a guide RNA.

In terms of biological role, involved in pre-rRNA and tRNA processing. Utilizes the methyl donor S-adenosyl-L-methionine to catalyze the site-specific 2'-hydroxyl methylation of ribose moieties in rRNA and tRNA. Site specificity is provided by a guide RNA that base pairs with the substrate. Methylation occurs at a characteristic distance from the sequence involved in base pairing with the guide RNA. The chain is Fibrillarin-like rRNA/tRNA 2'-O-methyltransferase from Pyrobaculum calidifontis (strain DSM 21063 / JCM 11548 / VA1).